The chain runs to 419 residues: Argininosuccinate synthase (419 aa).

9-17 (AYSGGLDTS) lines the ATP pocket. Position 87 (tyrosine 87) interacts with L-citrulline. Glycine 117 is a binding site for ATP. Residues threonine 119, asparagine 123, and aspartate 124 each coordinate L-aspartate. Asparagine 123 contributes to the L-citrulline binding site. L-citrulline contacts are provided by arginine 127, serine 175, serine 184, glutamate 260, and tyrosine 272.

The protein belongs to the argininosuccinate synthase family. Type 1 subfamily. In terms of assembly, homotetramer.

It is found in the cytoplasm. The enzyme catalyses L-citrulline + L-aspartate + ATP = 2-(N(omega)-L-arginino)succinate + AMP + diphosphate + H(+). The protein operates within amino-acid biosynthesis; L-arginine biosynthesis; L-arginine from L-ornithine and carbamoyl phosphate: step 2/3. The protein is Argininosuccinate synthase of Brevibacillus brevis (strain 47 / JCM 6285 / NBRC 100599).